Here is a 149-residue protein sequence, read N- to C-terminus: Large ribosomal subunit protein uL13 (149 aa).

This sequence belongs to the universal ribosomal protein uL13 family. As to quaternary structure, part of the 50S ribosomal subunit.

In terms of biological role, this protein is one of the early assembly proteins of the 50S ribosomal subunit, although it is not seen to bind rRNA by itself. It is important during the early stages of 50S assembly. This chain is Large ribosomal subunit protein uL13, found in Chlorobium chlorochromatii (strain CaD3).